Reading from the N-terminus, the 334-residue chain is Phosphoribosylformylglycinamidine cyclo-ligase (334 aa).

The protein belongs to the AIR synthase family.

It is found in the cytoplasm. It catalyses the reaction 2-formamido-N(1)-(5-O-phospho-beta-D-ribosyl)acetamidine + ATP = 5-amino-1-(5-phospho-beta-D-ribosyl)imidazole + ADP + phosphate + H(+). The protein operates within purine metabolism; IMP biosynthesis via de novo pathway; 5-amino-1-(5-phospho-D-ribosyl)imidazole from N(2)-formyl-N(1)-(5-phospho-D-ribosyl)glycinamide: step 2/2. The chain is Phosphoribosylformylglycinamidine cyclo-ligase from Pyrococcus furiosus (strain ATCC 43587 / DSM 3638 / JCM 8422 / Vc1).